A 180-amino-acid polypeptide reads, in one-letter code: Mediator of RNA polymerase II transcription subunit 31 (180 aa).

Disordered regions lie at residues 1–24 (MQAL…ARTP) and 123–180 (WRVG…GQAL). The span at 127–138 (KPAEDKQSEEKP) shows a compositional bias: basic and acidic residues. Residues 145–154 (LDDDEEEDEP) are compositionally biased toward acidic residues.

The protein belongs to the Mediator complex subunit 31 family. In terms of assembly, component of the Mediator complex.

Its subcellular location is the nucleus. Functionally, component of the Mediator complex, a coactivator involved in the regulated transcription of nearly all RNA polymerase II-dependent genes. Mediator functions as a bridge to convey information from gene-specific regulatory proteins to the basal RNA polymerase II transcription machinery. Mediator is recruited to promoters by direct interactions with regulatory proteins and serves as a scaffold for the assembly of a functional preinitiation complex with RNA polymerase II and the general transcription factors. The chain is Mediator of RNA polymerase II transcription subunit 31 (SOH1) from Cryptococcus neoformans var. neoformans serotype D (strain B-3501A) (Filobasidiella neoformans).